A 596-amino-acid chain; its full sequence is Interleukin-1 receptor-associated kinase 3 (596 aa).

One can recognise a Death domain in the interval 41-106; sequence WRGLAERLSS…RAIHLITNYG (66 aa). Serine 110 carries the phosphoserine; by IRAK1 modification. One can recognise a Protein kinase domain in the interval 165–452; it reads FHKDFLIGEG…LESTQASLYF (288 aa). ATP contacts are provided by residues 171–179, lysine 192, 295–298, and aspartate 311; these read IGEGEIFEV and SSAN. Position 467 is a phosphoserine (serine 467). Positions 560–596 are disordered; it reads NIDPSSEAPGHSCRSRPVESSCSSKFSWDEYEQYKKE.

The protein belongs to the protein kinase superfamily. TKL Ser/Thr protein kinase family. Pelle subfamily. In terms of assembly, monomer. Homodimer; disulfide-linked. May interact with IRAK4 (when phosphorylated). Interacts (when phosphorylated at Ser-110) with PIN1 (via WW domain) in response to IL33-mediated (but not TLR4 ligand LPS) dendritic cell stimulation. In terms of tissue distribution, expressed in eosinophils, dendritic cells and/or monocytes (at protein level). Expressed predominantly in peripheral blood lymphocytes.

It is found in the cytoplasm. The protein localises to the nucleus. Its function is as follows. Putative inactive protein kinase which regulates signaling downstream of immune receptors including IL1R and Toll-like receptors. Inhibits dissociation of IRAK1 and IRAK4 from the Toll-like receptor signaling complex by either inhibiting the phosphorylation of IRAK1 and IRAK4 or stabilizing the receptor complex. Upon IL33-induced lung inflammation, positively regulates expression of IL6, CSF3, CXCL2 and CCL5 mRNAs in dendritic cells. The polypeptide is Interleukin-1 receptor-associated kinase 3 (Homo sapiens (Human)).